The primary structure comprises 235 residues: Pathogen-related protein (235 aa).

This chain is Pathogen-related protein, found in Hordeum vulgare (Barley).